Consider the following 1005-residue polypeptide: Mediator of RNA polymerase II transcription subunit 24 (1005 aa).

Belongs to the Mediator complex subunit 24 family. As to quaternary structure, component of the Mediator complex.

It is found in the nucleus. Functionally, component of the Mediator complex, a coactivator involved in the regulated transcription of nearly all RNA polymerase II-dependent genes. Mediator functions as a bridge to convey information from gene-specific regulatory proteins to the basal RNA polymerase II transcription machinery. Mediator is recruited to promoters by direct interactions with regulatory proteins and serves as a scaffold for the assembly of a functional preinitiation complex with RNA polymerase II and the general transcription factors. This chain is Mediator of RNA polymerase II transcription subunit 24 (MED24), found in Aedes aegypti (Yellowfever mosquito).